Reading from the N-terminus, the 451-residue chain is tRNA-2-methylthio-N(6)-dimethylallyladenosine synthase (451 aa).

Residues 18–134 form the MTTase N-terminal domain; that stretch reads ARVYLETYGC…LPNLLDLAES (117 aa). Residues C27, C63, C97, C170, C174, and C177 each contribute to the [4Fe-4S] cluster site. The Radical SAM core domain occupies 156–386; sequence RKNGHSAFLA…IALQQKISAE (231 aa). The TRAM domain occupies 389 to 451; it reads RNDIGNTHEV…TSATLIGNAL (63 aa).

It belongs to the methylthiotransferase family. MiaB subfamily. Monomer. [4Fe-4S] cluster serves as cofactor.

It localises to the cytoplasm. The enzyme catalyses N(6)-dimethylallyladenosine(37) in tRNA + (sulfur carrier)-SH + AH2 + 2 S-adenosyl-L-methionine = 2-methylsulfanyl-N(6)-dimethylallyladenosine(37) in tRNA + (sulfur carrier)-H + 5'-deoxyadenosine + L-methionine + A + S-adenosyl-L-homocysteine + 2 H(+). Functionally, catalyzes the methylthiolation of N6-(dimethylallyl)adenosine (i(6)A), leading to the formation of 2-methylthio-N6-(dimethylallyl)adenosine (ms(2)i(6)A) at position 37 in tRNAs that read codons beginning with uridine. This is tRNA-2-methylthio-N(6)-dimethylallyladenosine synthase from Chloroherpeton thalassium (strain ATCC 35110 / GB-78).